The primary structure comprises 235 residues: MSRSARRKTSALNTVLRVVEVFASIQGEGPFTGTYSVFVRLAGCNLRCPFCDTRYAWSLEAGKPLGVEELVEEIARYEPSLVVITGGEPLLQRHPLNSLVEGLESLGLRVQLETNGILPAPARDEQLWRVYHVVSPKDVPVRVPGAKLHPSWVDYARATGRAWFKFLVANEQHVREVAEYVAKLGIPRSRVYIMPLTPEKLDMKELLELHSRIASLAVKWRLNFSPRLHLLVQLP.

Substrate-binding positions include 25 to 27 (IQG) and R40. The Radical SAM core domain occupies 31–235 (FTGTYSVFVR…PRLHLLVQLP (205 aa)). [4Fe-4S] cluster is bound by residues C44, C48, and C51. Residue T53 coordinates Mg(2+). T85 is a binding site for substrate. S-adenosyl-L-methionine contacts are provided by residues G87 and 135-137 (SPK). P235 is a binding site for substrate.

It belongs to the radical SAM superfamily. 7-carboxy-7-deazaguanine synthase family. As to quaternary structure, homodimer. The cofactor is [4Fe-4S] cluster. S-adenosyl-L-methionine serves as cofactor. Mg(2+) is required as a cofactor.

The enzyme catalyses 6-carboxy-5,6,7,8-tetrahydropterin + H(+) = 7-carboxy-7-deazaguanine + NH4(+). Its pathway is purine metabolism; 7-cyano-7-deazaguanine biosynthesis. Functionally, catalyzes the complex heterocyclic radical-mediated conversion of 6-carboxy-5,6,7,8-tetrahydropterin (CPH4) to 7-carboxy-7-deazaguanine (CDG), a step common to the biosynthetic pathways of all 7-deazapurine-containing compounds. In Hyperthermus butylicus (strain DSM 5456 / JCM 9403 / PLM1-5), this protein is 7-carboxy-7-deazaguanine synthase.